Here is a 206-residue protein sequence, read N- to C-terminus: MSQANHNDTHNNIDDNINNHFNDSESLDTLDISASDNIDDEVLDGFYHREQLLSVMMATLDYIDERVKKGLILPYFDDIDTEQWQEKIKALDIYITDEDEGRELNLEARQKDYATNILSYPSDLPAAIIGLMPTLPLGELVICHAVMVREAAEQNKAAVQHINHLLVHGILHLLGFDHELGQAEQDEMERFEIEILAGLNIPNPYN.

Residues 1-20 form a disordered region; the sequence is MSQANHNDTHNNIDDNINNH. Zn(2+)-binding residues include histidine 168, histidine 172, and histidine 178.

Belongs to the endoribonuclease YbeY family. The cofactor is Zn(2+).

It is found in the cytoplasm. Single strand-specific metallo-endoribonuclease involved in late-stage 70S ribosome quality control and in maturation of the 3' terminus of the 16S rRNA. The chain is Endoribonuclease YbeY from Psychrobacter arcticus (strain DSM 17307 / VKM B-2377 / 273-4).